The following is a 382-amino-acid chain: Flap endonuclease 1 (382 aa).

The segment at 1 to 104 (MGIKGLSQVI…GELEKRSERR (104 aa)) is N-domain. A Mg(2+)-binding site is contributed by Asp34. DNA contacts are provided by Arg47 and Arg70. The Mg(2+) site is built by Asp86, Glu158, Glu160, Asp179, and Asp181. The I-domain stretch occupies residues 122 to 253 (EAEKFERRLV…KKAVELIRQH (132 aa)). Residue Glu158 participates in DNA binding. Gly231 and Asp233 together coordinate DNA. Asp233 is a Mg(2+) binding site. The segment at 336-344 (TQGRIDSFF) is interaction with PCNA. Residues 358–382 (KRKAEEAEKAKKGAKKGGPPKKRAK) form a disordered region. Residues 359–368 (RKAEEAEKAK) are compositionally biased toward basic and acidic residues. Positions 369–382 (KGAKKGGPPKKRAK) are enriched in basic residues.

The protein belongs to the XPG/RAD2 endonuclease family. FEN1 subfamily. As to quaternary structure, interacts with PCNA. Three molecules of crn-1 bind to one PCNA trimer with each molecule binding to one PCNA monomer. PCNA stimulates the nuclease activity without altering cleavage specificity. Interacts with cps-6. It depends on Mg(2+) as a cofactor. Phosphorylated. Phosphorylation upon DNA damage induces relocalization to the nuclear plasma.

It localises to the nucleus. Its subcellular location is the nucleolus. The protein resides in the nucleoplasm. It is found in the mitochondrion. In terms of biological role, structure-specific nuclease with 5'-flap endonuclease and 5'-3' exonuclease activities involved in DNA replication and repair. During DNA replication, cleaves the 5'-overhanging flap structure that is generated by displacement synthesis when DNA polymerase encounters the 5'-end of a downstream Okazaki fragment. It enters the flap from the 5'-end and then tracks to cleave the flap base, leaving a nick for ligation. Also involved in the long patch base excision repair (LP-BER) pathway, by cleaving within the apurinic/apyrimidinic (AP) site-terminated flap. Acts as a genome stabilization factor that prevents flaps from equilibrating into structures that lead to duplications and deletions. Also possesses 5'-3' exonuclease activity on nicked or gapped double-stranded DNA, and exhibits RNase H activity. Also involved in replication and repair of rDNA and in repairing mitochondrial DNA. Can associate and cooperate with cps-6 to promote stepwise DNA fragmentation, utilizing the endonuclease activity of cps-6 and both of its own 5'-3' exonuclease activity and gap-dependent endonuclease activity. May play a critical role in switching the state of cells from DNA replication/repair to DNA degradation during apoptosis. This Caenorhabditis elegans protein is Flap endonuclease 1.